A 231-amino-acid chain; its full sequence is NADH-ubiquinone oxidoreductase chain 4 (231 aa).

6 helical membrane-spanning segments follow: residues proline 1–isoleucine 21, leucine 34–leucine 54, isoleucine 63–glycine 85, alanine 89–tyrosine 111, isoleucine 128–proline 148, and leucine 156–serine 176.

The protein belongs to the complex I subunit 4 family.

The protein resides in the mitochondrion membrane. It carries out the reaction a ubiquinone + NADH + 5 H(+)(in) = a ubiquinol + NAD(+) + 4 H(+)(out). Functionally, core subunit of the mitochondrial membrane respiratory chain NADH dehydrogenase (Complex I) that is believed to belong to the minimal assembly required for catalysis. Complex I functions in the transfer of electrons from NADH to the respiratory chain. The immediate electron acceptor for the enzyme is believed to be ubiquinone. This chain is NADH-ubiquinone oxidoreductase chain 4 (MT-ND4), found in Crotalus concolor (Midget faded rattlesnake).